A 393-amino-acid polypeptide reads, in one-letter code: Chalcone synthase DII (393 aa).

The active site involves Cys-164.

Belongs to the thiolase-like superfamily. Chalcone/stilbene synthases family.

The catalysed reaction is (E)-4-coumaroyl-CoA + 3 malonyl-CoA + 3 H(+) = 2',4,4',6'-tetrahydroxychalcone + 3 CO2 + 4 CoA. Its pathway is secondary metabolite biosynthesis; flavonoid biosynthesis. Its function is as follows. The primary product of this enzyme is 4,2',4',6'-tetrahydroxychalcone (also termed naringenin-chalcone or chalcone) which can under specific conditions spontaneously isomerize into naringenin. The sequence is that of Chalcone synthase DII (CHS-DII) from Ipomoea batatas (Sweet potato).